A 303-amino-acid polypeptide reads, in one-letter code: 4-diphosphocytidyl-2-C-methyl-D-erythritol kinase (303 aa).

Lys24 is an active-site residue. ATP is bound at residue 111-121; that stretch reads PIASGIGGGSA. Asp153 is an active-site residue.

This sequence belongs to the GHMP kinase family. IspE subfamily.

It catalyses the reaction 4-CDP-2-C-methyl-D-erythritol + ATP = 4-CDP-2-C-methyl-D-erythritol 2-phosphate + ADP + H(+). Its pathway is isoprenoid biosynthesis; isopentenyl diphosphate biosynthesis via DXP pathway; isopentenyl diphosphate from 1-deoxy-D-xylulose 5-phosphate: step 3/6. In terms of biological role, catalyzes the phosphorylation of the position 2 hydroxy group of 4-diphosphocytidyl-2C-methyl-D-erythritol. This Rhizobium johnstonii (strain DSM 114642 / LMG 32736 / 3841) (Rhizobium leguminosarum bv. viciae) protein is 4-diphosphocytidyl-2-C-methyl-D-erythritol kinase.